Here is a 174-residue protein sequence, read N- to C-terminus: Endoribonuclease YbeY (174 aa).

Residues His133, His137, and His143 each contribute to the Zn(2+) site.

The protein belongs to the endoribonuclease YbeY family. Requires Zn(2+) as cofactor.

Its subcellular location is the cytoplasm. Single strand-specific metallo-endoribonuclease involved in late-stage 70S ribosome quality control and in maturation of the 3' terminus of the 16S rRNA. This is Endoribonuclease YbeY from Paracoccus denitrificans (strain Pd 1222).